Consider the following 788-residue polypeptide: Integrin beta-6 (788 aa).

Positions 1 to 21 (MGIELLCLFFLFLGRNDHVQG) are cleaved as a signal peptide. The region spanning 22-71 (GCALGGAETCEDCLLIGPQCAWCSQENFTYLSGVGERCDTPANLLAKGCQ) is the PSI domain. Topologically, residues 22–709 (GCALGGAETC…KDCPKPPNSP (688 aa)) are extracellular. Intrachain disulfides connect C23/C41, C31/C454, C34/C59, C44/C70, C197/C204, C252/C293, C394/C406, C426/C452, C456/C476, C467/C479, C481/C490, C492/C519, C502/C517, C511/C522, C524/C537, C539/C560, C544/C558, C552/C563, C565/C574, C576/C599, C583/C597, C591/C602, C604/C614, C617/C620, C624/C670, C630/C649, C633/C645, and C678/C702. N48 and N97 each carry an N-linked (GlcNAc...) asparagine glycan. The 241-residue stretch at 131 to 371 (YPVDLYYLMD…QLIISAYEEL (241 aa)) folds into the VWFA domain. The Mg(2+) site is built by D140, S142, and S144. S144, D147, D148, and E179 together coordinate Ca(2+). The Ca(2+) site is built by N235, D237, P239, and E240. A Mg(2+)-binding site is contributed by E240. N260 is a glycosylation site (N-linked (GlcNAc...) asparagine). Ca(2+) is bound by residues D271 and K355. N387 carries an N-linked (GlcNAc...) asparagine glycan. A glycan (N-linked (GlcNAc...) asparagine) is linked at N418. I-EGF domains follow at residues 456-491 (CQKEVEVNSSKCNHGNGSFQCGVCACNPGHMGPHCE), 492-538 (CGED…PYCQ), 539-575 (CDDFSCVRHKGLLCGDNGDCECGECVCRSGWTGEYCN), and 576-615 (CTTSTDQCVSEDGVLCSGRGDCVCGKCICTNPGASGLTCE). 2 N-linked (GlcNAc...) asparagine glycosylation sites follow: N463 and N471. The chain crosses the membrane as a helical span at residues 710-730 (MIMLGVSLAILLIGVVLLCIW). Positions 731–758 (KLLVSFHDRKEVAKFEAERSKAKWQTGT) are interaction with HAX1. Residues 731–788 (KLLVSFHDRKEVAKFEAERSKAKWQTGTNPLYRGSTSTFKNVTYKHREKQKVDLSMDG) are Cytoplasmic-facing.

This sequence belongs to the integrin beta chain family. Heterodimer of an alpha and a beta subunit. Interacts with FLNB. Interacts with HAX1. ITGAV:ITGB6 interacts with FBN1. ITGAV:ITGB6 interacts with TGFB1.

The protein localises to the cell membrane. The protein resides in the cell junction. It localises to the focal adhesion. Its function is as follows. Integrin alpha-V:beta-6 (ITGAV:ITGB6) is a receptor for fibronectin and cytotactin. It recognizes the sequence R-G-D in its ligands. ITGAV:ITGB6 acts as a receptor for fibrillin-1 (FBN1) and mediates R-G-D-dependent cell adhesion to FBN1. Integrin alpha-V:beta-6 (ITGAV:ITGB6) mediates R-G-D-dependent release of transforming growth factor beta-1 (TGF-beta-1) from regulatory Latency-associated peptide (LAP), thereby playing a key role in TGF-beta-1 activation. The sequence is that of Integrin beta-6 (ITGB6) from Sus scrofa (Pig).